We begin with the raw amino-acid sequence, 501 residues long: Bifunctional pantoate ligase/cytidylate kinase (501 aa).

Positions 1–264 (MLSTQAELAA…CGTTRLIDHS (264 aa)) are pantoate--beta-alanine ligase. Residue 25-32 (MGGLHQGH) coordinates ATP. The active-site Proton donor is the H32. Position 55 (Q55) interacts with (R)-pantoate. A beta-alanine-binding site is contributed by Q55. 144–147 (GEKD) contacts ATP. (R)-pantoate is bound at residue Q150. ATP-binding positions include V173 and 181-184 (LSSR). Residues 265-501 (FLMTRQPLVA…PEEAWPTPAG (237 aa)) form a cytidylate kinase region.

It in the N-terminal section; belongs to the pantothenate synthetase family. In the C-terminal section; belongs to the cytidylate kinase family. Type 1 subfamily.

The protein resides in the cytoplasm. The enzyme catalyses (R)-pantoate + beta-alanine + ATP = (R)-pantothenate + AMP + diphosphate + H(+). It carries out the reaction CMP + ATP = CDP + ADP. It catalyses the reaction dCMP + ATP = dCDP + ADP. Its pathway is cofactor biosynthesis; (R)-pantothenate biosynthesis; (R)-pantothenate from (R)-pantoate and beta-alanine: step 1/1. Catalyzes the condensation of pantoate with beta-alanine in an ATP-dependent reaction via a pantoyl-adenylate intermediate. Its function is as follows. Catalyzes the transfer of a phosphate group from ATP to either CMP or dCMP to form CDP or dCDP and ADP, respectively. In Parasynechococcus marenigrum (strain WH8102), this protein is Bifunctional pantoate ligase/cytidylate kinase.